The primary structure comprises 367 residues: Peptide chain release factor 2 (367 aa).

Glutamine 254 is modified (N5-methylglutamine).

It belongs to the prokaryotic/mitochondrial release factor family. Post-translationally, methylated by PrmC. Methylation increases the termination efficiency of RF2.

It is found in the cytoplasm. Its function is as follows. Peptide chain release factor 2 directs the termination of translation in response to the peptide chain termination codons UGA and UAA. In Neisseria meningitidis serogroup C / serotype 2a (strain ATCC 700532 / DSM 15464 / FAM18), this protein is Peptide chain release factor 2.